The following is a 318-amino-acid chain: Methionyl-tRNA formyltransferase (318 aa).

113 to 116 (SLLP) contacts (6S)-5,6,7,8-tetrahydrofolate.

The protein belongs to the Fmt family.

It carries out the reaction L-methionyl-tRNA(fMet) + (6R)-10-formyltetrahydrofolate = N-formyl-L-methionyl-tRNA(fMet) + (6S)-5,6,7,8-tetrahydrofolate + H(+). Attaches a formyl group to the free amino group of methionyl-tRNA(fMet). The formyl group appears to play a dual role in the initiator identity of N-formylmethionyl-tRNA by promoting its recognition by IF2 and preventing the misappropriation of this tRNA by the elongation apparatus. In Hahella chejuensis (strain KCTC 2396), this protein is Methionyl-tRNA formyltransferase.